Here is a 282-residue protein sequence, read N- to C-terminus: Phosphoglucan phosphatase LSF2, chloroplastic (282 aa).

A chloroplast-targeting transit peptide spans 1-61 (MSVIGSKSCI…GENPGTNGVS (61 aa)). Substrate is bound by residues tyrosine 83, 153–156 (RHMR), aspartate 161, and 177–180 (SLEW). In terms of domain architecture, Tyrosine-protein phosphatase spans 92 to 249 (NYTLIRDELI…TYDLAKNDPW (158 aa)). The Phosphocysteine intermediate role is filled by cysteine 193. The Glucan phosphatase signature motif CXAGXGR motif lies at 193–199 (CSAGLGR). Residues 194 to 199 (SAGLGR), glycine 230, lysine 245, glutamate 251, 259 to 263 (NAFED), and glutamate 268 contribute to the substrate site.

As to expression, widely expressed.

Its subcellular location is the plastid. It localises to the chloroplast. Starch-associated phosphoglucan phosphatase that selectively dephosphorylates the glucan C3 position. Probably participates in the regulation of starch degradation. This Arabidopsis thaliana (Mouse-ear cress) protein is Phosphoglucan phosphatase LSF2, chloroplastic (LSF2).